Reading from the N-terminus, the 156-residue chain is 6,7-dimethyl-8-ribityllumazine synthase (156 aa).

Residues phenylalanine 22, 57 to 59 (AYE), and 81 to 83 (TVI) each bind 5-amino-6-(D-ribitylamino)uracil. 86 to 87 (GT) is a binding site for (2S)-2-hydroxy-3-oxobutyl phosphate. Histidine 89 serves as the catalytic Proton donor. Phenylalanine 114 is a binding site for 5-amino-6-(D-ribitylamino)uracil. Arginine 128 lines the (2S)-2-hydroxy-3-oxobutyl phosphate pocket.

This sequence belongs to the DMRL synthase family. In terms of assembly, forms an icosahedral capsid composed of 60 subunits, arranged as a dodecamer of pentamers.

The enzyme catalyses (2S)-2-hydroxy-3-oxobutyl phosphate + 5-amino-6-(D-ribitylamino)uracil = 6,7-dimethyl-8-(1-D-ribityl)lumazine + phosphate + 2 H2O + H(+). The protein operates within cofactor biosynthesis; riboflavin biosynthesis; riboflavin from 2-hydroxy-3-oxobutyl phosphate and 5-amino-6-(D-ribitylamino)uracil: step 1/2. Catalyzes the formation of 6,7-dimethyl-8-ribityllumazine by condensation of 5-amino-6-(D-ribitylamino)uracil with 3,4-dihydroxy-2-butanone 4-phosphate. This is the penultimate step in the biosynthesis of riboflavin. The protein is 6,7-dimethyl-8-ribityllumazine synthase of Yersinia enterocolitica serotype O:8 / biotype 1B (strain NCTC 13174 / 8081).